Reading from the N-terminus, the 277-residue chain is Large ribosomal subunit protein uL2 (277 aa).

Disordered regions lie at residues Lys37 to His60 and Val223 to Thr264. Residues Ser39–Ile49 show a composition bias toward polar residues. A compositionally biased stretch (basic residues) spans Thr50–His60. Over residues Asp229–Glu244 the composition is skewed to basic and acidic residues.

Belongs to the universal ribosomal protein uL2 family. In terms of assembly, part of the 50S ribosomal subunit. Forms a bridge to the 30S subunit in the 70S ribosome.

Its function is as follows. One of the primary rRNA binding proteins. Required for association of the 30S and 50S subunits to form the 70S ribosome, for tRNA binding and peptide bond formation. It has been suggested to have peptidyltransferase activity; this is somewhat controversial. Makes several contacts with the 16S rRNA in the 70S ribosome. This Neisseria gonorrhoeae (strain ATCC 700825 / FA 1090) protein is Large ribosomal subunit protein uL2.